The chain runs to 1334 residues: Adenylate cyclase type 9 (1334 aa).

2 disordered regions span residues 1–28 (MASPPHQQLLHHHSTEVSCDSSGDSNSV) and 49–71 (ISSSCSSGESGGVGRGGGGGLRR). Over 1-113 (MASPPHQQLL…CFPQTQRRFR (113 aa)) the chain is Cytoplasmic. The span at 16–28 (EVSCDSSGDSNSV) shows a compositional bias: polar residues. A compositionally biased stretch (gly residues) spans 57 to 69 (ESGGVGRGGGGGL). Residues 114–134 (YALFYIGSACLLWGIYFGVHM) form a helical membrane-spanning segment. Residues 135-137 (REK) lie on the Extracellular side of the membrane. The chain crosses the membrane as a helical span at residues 138–158 (QMVFMVPALCFLLVCVAFFAF). At 159 to 167 (TFTKAYARR) the chain is on the cytoplasmic side. A helical transmembrane segment spans residues 168-187 (YVWTSGYTLLVFALTLAPQF). Residues 188–207 (QPWTLGERQRVQPRPAAPVD) lie on the Extracellular side of the membrane. Residues 208-227 (TCLSQVGSFSMCVEVLLLLY) form a helical membrane-spanning segment. Over 228–233 (TVMHLP) the chain is Cytoplasmic. The helical transmembrane segment at 234–250 (LYLSLFLGLSYSVLFET) threads the bilayer. Residues 251–269 (SAFRDESCTLLGGGAVYWE) lie on the Extracellular side of the membrane. The helical transmembrane segment at 270 to 290 (LLSKAFLHVCIHAIGIHLFIM) threads the bilayer. The Cytoplasmic portion of the chain corresponds to 291–768 (SEVRSRSTFL…VKTFASATFS (478 aa)). A disordered region spans residues 338–363 (QGDDESENSVKRHSTSSPKNRKKKPS). Over residues 348–363 (KRHSTSSPKNRKKKPS) the composition is skewed to basic residues. Residues D388, I389, and D432 each coordinate Mg(2+). ATP contacts are provided by residues 388–393 (DIVGFT), 430–432 (LGD), and R476. Positions 635-670 (GCQDEHKNSTKAPGGHSPKTQNGLLSPPQEEKLSNS) are disordered. The helical transmembrane segment at 769 to 789 (SLLDVFLSTTVFLILSVTCFL) threads the bilayer. Residues 790–800 (KHGMVASPPPP) are Extracellular-facing. Residues 801 to 821 (AAVVVFVIAILLEVLSLVISV) form a helical membrane-spanning segment. Residues 822–849 (RMVFFLEEVMACTKRLLELISGWLPRHF) lie on the Cytoplasmic side of the membrane. A helical membrane pass occupies residues 850 to 870 (LGAILVSLPALAVFSHFTSDF). The Extracellular portion of the chain corresponds to 871–873 (ETN). The helical transmembrane segment at 874–894 (IHYTMFMCCAILIAIVQYCNF) threads the bilayer. The Cytoplasmic portion of the chain corresponds to 895 to 902 (CQLSSWMR). The chain crosses the membrane as a helical span at residues 903-923 (SLLATVVGAVLLILLYVSLCP). The Extracellular segment spans residues 924-957 (DSSVETLHLDLAQNLSSRKSPCNSSMPADVKRPA). Residues N937 and N946 are each glycosylated (N-linked (GlcNAc...) asparagine). The chain crosses the membrane as a helical span at residues 958–978 (DLIGQEVILAVFLLLLLVWFL). The Cytoplasmic segment spans residues 979-1334 (NRSFEVSYRL…LTKLNVSKSV (356 aa)). Residues K1090, 1167–1169 (DIW), 1174–1178 (NIASR), and K1214 contribute to the ATP site. Residues 1266–1303 (SVQNSDKTAHATDNSETKDALPSSKKLQKEPTKAEERC) are disordered. 2 stretches are compositionally biased toward basic and acidic residues: residues 1272 to 1284 (KTAHATDNSETKD) and 1292 to 1303 (LQKEPTKAEERC).

This sequence belongs to the adenylyl cyclase class-4/guanylyl cyclase family. Requires Mg(2+) as cofactor. The cofactor is Mn(2+). As to expression, detected in embryonic heart (at protein level).

The protein localises to the cell membrane. It localises to the membrane. The catalysed reaction is ATP = 3',5'-cyclic AMP + diphosphate. With respect to regulation, insensitive to calcium/calmodulin, forskolin and somatostatin. Stimulated by beta-adrenergic receptor activation. Activity is down-regulated by calcium/calcineurin. In terms of biological role, adenylyl cyclase that catalyzes the formation of the signaling molecule cAMP in response to activation of G protein-coupled receptors. The chain is Adenylate cyclase type 9 (ADCY9) from Gallus gallus (Chicken).